A 160-amino-acid polypeptide reads, in one-letter code: 3-hydroxyacyl-[acyl-carrier-protein] dehydratase FabZ (160 aa).

His-63 is an active-site residue.

This sequence belongs to the thioester dehydratase family. FabZ subfamily.

The protein resides in the cytoplasm. The catalysed reaction is a (3R)-hydroxyacyl-[ACP] = a (2E)-enoyl-[ACP] + H2O. In terms of biological role, involved in unsaturated fatty acids biosynthesis. Catalyzes the dehydration of short chain beta-hydroxyacyl-ACPs and long chain saturated and unsaturated beta-hydroxyacyl-ACPs. This is 3-hydroxyacyl-[acyl-carrier-protein] dehydratase FabZ from Xylella fastidiosa (strain M23).